Here is a 2620-residue protein sequence, read N- to C-terminus: Ubiquitin carboxyl-terminal hydrolase 24 (2620 aa).

The region spanning 3-44 (SEEEQHMTTLLCMGFSDPATIRKALRLAKNDINEAVALLTNE) is the UBA domain. Positions 45–102 (RPGLDYGGYEPMDSGGGPSPGPGGGPRGDGGGDGGGGGPSRGGSTGGGGGFDPPPAYH) are disordered. A compositionally biased stretch (gly residues) spans 58–95 (SGGGPSPGPGGGPRGDGGGDGGGGGPSRGGSTGGGGGF). 2 positions are modified to phosphoserine: S63 and S88. Y942 carries the phosphotyrosine modification. Disordered regions lie at residues 1034–1054 (TSGS…SSSS) and 1129–1151 (TLLS…QQHQ). Over residues 1131–1151 (LSESSSQSSKSPSLSSKQQHQ) the composition is skewed to low complexity. Phosphoserine occurs at positions 1141 and 1285. One can recognise a USP domain in the interval 1689-2042 (VGLRNGGATC…NAYMLFYQRV (354 aa)). C1698 acts as the Nucleophile in catalysis. The disordered stretch occupies residues 1921 to 1945 (ARQDSSSEVGENGRSVDQGGGGSPR). At S1943 the chain carries Phosphoserine. The Proton acceptor role is filled by H1970. A phosphoserine mark is found at S2047, S2077, and S2561. Positions 2063–2090 (AEDLSLSAPSSPEISPQSSPRPHRPNND) are disordered. Low complexity predominate over residues 2069–2082 (SAPSSPEISPQSSP). Position 2565 is a phosphothreonine (T2565). Positions 2575-2620 (EKEQSGSSNGSESSPANENGDRHLQQGSESPMMIGELRSDLDDVDP) are disordered. Low complexity predominate over residues 2579–2592 (SGSSNGSESSPANE). S2604 is subject to Phosphoserine. Basic and acidic residues predominate over residues 2611 to 2620 (LRSDLDDVDP).

This sequence belongs to the peptidase C19 family. (Microbial infection) Interacts with human cytomegalovirus protein UL38.

The catalysed reaction is Thiol-dependent hydrolysis of ester, thioester, amide, peptide and isopeptide bonds formed by the C-terminal Gly of ubiquitin (a 76-residue protein attached to proteins as an intracellular targeting signal).. Functionally, ubiquitin-specific protease that regulates cell survival in various contexts through modulating the protein stability of some of its substrates including DDB2, MCL1 or TP53. Plays a positive role on ferritinophagy where ferritin is degraded in lysosomes and releases free iron. In Homo sapiens (Human), this protein is Ubiquitin carboxyl-terminal hydrolase 24 (USP24).